We begin with the raw amino-acid sequence, 363 residues long: Tetraacyldisaccharide 4'-kinase (363 aa).

An ATP-binding site is contributed by 78 to 85 (TVGGNGKT).

This sequence belongs to the LpxK family.

It carries out the reaction a lipid A disaccharide + ATP = a lipid IVA + ADP + H(+). The protein operates within glycolipid biosynthesis; lipid IV(A) biosynthesis; lipid IV(A) from (3R)-3-hydroxytetradecanoyl-[acyl-carrier-protein] and UDP-N-acetyl-alpha-D-glucosamine: step 6/6. Functionally, transfers the gamma-phosphate of ATP to the 4'-position of a tetraacyldisaccharide 1-phosphate intermediate (termed DS-1-P) to form tetraacyldisaccharide 1,4'-bis-phosphate (lipid IVA). The chain is Tetraacyldisaccharide 4'-kinase from Wigglesworthia glossinidia brevipalpis.